A 257-amino-acid chain; its full sequence is Alcohol dehydrogenase 1 (257 aa).

Position 9-33 (9-33 (VFVGGLGFIGYEACKTLITRDLASL)) interacts with NAD(+). Ser137 contributes to the substrate binding site. Tyr150 acts as the Proton acceptor in catalysis.

Belongs to the short-chain dehydrogenases/reductases (SDR) family. Homodimer.

The catalysed reaction is a primary alcohol + NAD(+) = an aldehyde + NADH + H(+). It catalyses the reaction a secondary alcohol + NAD(+) = a ketone + NADH + H(+). The protein is Alcohol dehydrogenase 1 (ADH1) of Ceratitis cosyra (Mango fruit fly).